We begin with the raw amino-acid sequence, 431 residues long: Homogentisate 1,2-dioxygenase (431 aa).

His286 (proton acceptor) is an active-site residue. Fe cation contacts are provided by His329 and Glu335. Residues Tyr344 and His365 each contribute to the homogentisate site. A Fe cation-binding site is contributed by His365.

This sequence belongs to the homogentisate dioxygenase family. In terms of assembly, hexamer; dimer of trimers. The cofactor is Fe cation.

It catalyses the reaction homogentisate + O2 = 4-maleylacetoacetate + H(+). Its pathway is amino-acid degradation; L-phenylalanine degradation; acetoacetate and fumarate from L-phenylalanine: step 4/6. Its function is as follows. Involved in the catabolism of homogentisate (2,5-dihydroxyphenylacetate or 2,5-OH-PhAc), a central intermediate in the degradation of phenylalanine and tyrosine. Catalyzes the oxidative ring cleavage of the aromatic ring of homogentisate to yield maleylacetoacetate. In Pseudomonas fluorescens (strain Pf0-1), this protein is Homogentisate 1,2-dioxygenase.